Reading from the N-terminus, the 545-residue chain is Chaperonin GroEL (545 aa).

ATP is bound by residues 30–33 (TLGP), lysine 51, 87–91 (DGTTT), glycine 415, and aspartate 496.

Belongs to the chaperonin (HSP60) family. As to quaternary structure, forms a cylinder of 14 subunits composed of two heptameric rings stacked back-to-back. Interacts with the co-chaperonin GroES.

Its subcellular location is the cytoplasm. The enzyme catalyses ATP + H2O + a folded polypeptide = ADP + phosphate + an unfolded polypeptide.. Its function is as follows. Together with its co-chaperonin GroES, plays an essential role in assisting protein folding. The GroEL-GroES system forms a nano-cage that allows encapsulation of the non-native substrate proteins and provides a physical environment optimized to promote and accelerate protein folding. The polypeptide is Chaperonin GroEL (Haemophilus influenzae (strain 86-028NP)).